A 235-amino-acid chain; its full sequence is tRNA (guanine-N(1)-)-methyltransferase (235 aa).

Residues G112 and 131-136 each bind S-adenosyl-L-methionine; that span reads LGDFVL.

The protein belongs to the RNA methyltransferase TrmD family. Homodimer.

The protein resides in the cytoplasm. The catalysed reaction is guanosine(37) in tRNA + S-adenosyl-L-methionine = N(1)-methylguanosine(37) in tRNA + S-adenosyl-L-homocysteine + H(+). Specifically methylates guanosine-37 in various tRNAs. This chain is tRNA (guanine-N(1)-)-methyltransferase, found in Synechococcus elongatus (strain ATCC 33912 / PCC 7942 / FACHB-805) (Anacystis nidulans R2).